A 272-amino-acid chain; its full sequence is Small ribosomal subunit protein uS2 (272 aa).

The segment at 244 to 272 is disordered; it reads EDDYEGAEGDLDLDSANEEESLEDNNEEE.

The protein belongs to the universal ribosomal protein uS2 family.

This chain is Small ribosomal subunit protein uS2, found in Trichodesmium erythraeum (strain IMS101).